Reading from the N-terminus, the 219-residue chain is Probable GTP-binding protein EngB (219 aa).

The region spanning 33 to 217 (GPLEIAFAGR…RAAICETVGH (185 aa)) is the EngB-type G domain. GTP-binding positions include 41–48 (GRSNVGKS), 68–72 (GRTQE), 95–98 (DMPG), 162–165 (TKTD), and 196–198 (TSS). Mg(2+) is bound by residues Ser48 and Thr70.

Belongs to the TRAFAC class TrmE-Era-EngA-EngB-Septin-like GTPase superfamily. EngB GTPase family. Mg(2+) serves as cofactor.

Functionally, necessary for normal cell division and for the maintenance of normal septation. This is Probable GTP-binding protein EngB from Allorhizobium ampelinum (strain ATCC BAA-846 / DSM 112012 / S4) (Agrobacterium vitis (strain S4)).